Reading from the N-terminus, the 2017-residue chain is Rootletin (2017 aa).

2 coiled-coil regions span residues 70-262 (ATEM…KVTN) and 318-444 (ERDL…LETE). The span at 464 to 483 (SESGVQLSGSERTADASNGS) shows a compositional bias: polar residues. The tract at residues 464 to 518 (SESGVQLSGSERTADASNGSLRGLSGQRTPSPPRRSSPGRGRSPRRGPSPACSDS) is disordered. Over residues 499-513 (SSPGRGRSPRRGPSP) the composition is skewed to low complexity. Coiled-coil stretches lie at residues 546–1058 (QDLL…LAES) and 1091–1438 (EMER…GLRS). 2 disordered regions span residues 1184-1226 (LRES…RSAV) and 1443-1575 (GLGL…GRLS). A phosphoserine mark is found at S1460, S1470, S1476, S1483, S1486, S1490, and S1496. Residues 1505–1704 (EAVRGALREF…DSEVKAGTLQ (200 aa)) are a coiled coil. Basic and acidic residues predominate over residues 1510–1529 (ALREFLQELRSAQRERDELR). S1575 and S1660 each carry phosphoserine. The interval 1962–2017 (RSAQAQTERTLEARERAHRQRVRGLEEQVSTLKGQLQQELRRSSAPFSPPSGPPEK) is disordered. The segment covering 1989-1999 (QVSTLKGQLQQ) has biased composition (polar residues). The span at 2008-2017 (FSPPSGPPEK) shows a compositional bias: pro residues.

This sequence belongs to the rootletin family. Homomer. Interacts with KLC3, NEK2 and the N-terminus of CEP250. Interacts with CEP44. Interacts with CCDC102B (via N-terminus). Phosphorylated by NEK2 which may regulate its association with centrosomes.

It localises to the cytoplasm. The protein resides in the cytoskeleton. The protein localises to the microtubule organizing center. It is found in the centrosome. Its subcellular location is the centriole. It localises to the cilium basal body. Its function is as follows. Major structural component of the ciliary rootlet, a cytoskeletal-like structure in ciliated cells which originates from the basal body at the proximal end of a cilium and extends proximally toward the cell nucleus. Furthermore, is required for the correct positioning of the cilium basal body relative to the cell nucleus, to allow for ciliogenesis. Contributes to centrosome cohesion before mitosis. The chain is Rootletin from Homo sapiens (Human).